A 70-amino-acid polypeptide reads, in one-letter code: Small ribosomal subunit protein bS21 (70 aa).

The protein belongs to the bacterial ribosomal protein bS21 family.

This chain is Small ribosomal subunit protein bS21, found in Campylobacter fetus subsp. fetus (strain 82-40).